A 262-amino-acid polypeptide reads, in one-letter code: Phosphonates import ATP-binding protein PhnC (262 aa).

One can recognise an ABC transporter domain in the interval Ile5–Asn253. Gly37–Ser44 provides a ligand contact to ATP.

It belongs to the ABC transporter superfamily. Phosphonates importer (TC 3.A.1.9.1) family. The complex is composed of two ATP-binding proteins (PhnC), two transmembrane proteins (PhnE) and a solute-binding protein (PhnD).

The protein localises to the cell inner membrane. It catalyses the reaction phosphonate(out) + ATP + H2O = phosphonate(in) + ADP + phosphate + H(+). In terms of biological role, part of the ABC transporter complex PhnCDE involved in phosphonates import. Responsible for energy coupling to the transport system. The sequence is that of Phosphonates import ATP-binding protein PhnC from Shigella dysenteriae serotype 1 (strain Sd197).